The primary structure comprises 78 residues: Acyl carrier protein (78 aa).

Residues Met-1–Thr-75 enclose the Carrier domain. O-(pantetheine 4'-phosphoryl)serine is present on Ser-35.

The protein belongs to the acyl carrier protein (ACP) family. Post-translationally, 4'-phosphopantetheine is transferred from CoA to a specific serine of apo-ACP by AcpS. This modification is essential for activity because fatty acids are bound in thioester linkage to the sulfhydryl of the prosthetic group.

Its subcellular location is the cytoplasm. Its pathway is lipid metabolism; fatty acid biosynthesis. Carrier of the growing fatty acid chain in fatty acid biosynthesis. The chain is Acyl carrier protein (acpP) from Shigella flexneri.